Here is a 100-residue protein sequence, read N- to C-terminus: Putative septation protein SpoVG (100 aa).

This sequence belongs to the SpoVG family.

Functionally, could be involved in septation. This Clostridium novyi (strain NT) protein is Putative septation protein SpoVG.